A 452-amino-acid chain; its full sequence is Retrograde protein of 51 kDa (452 aa).

A compositionally biased stretch (basic and acidic residues) spans 1-13; the sequence is MQKGAKIEDEGRQ. A disordered region spans residues 1 to 50; sequence MQKGAKIEDEGRQSRIQSRNFIIQRSDPRTRGSSVYSSRSSSYNVRSSIS. Residues 1 to 75 form a head region; that stretch reads MQKGAKIEDE…KGNREKEKRE (75 aa). A compositionally biased stretch (polar residues) spans 14-23; that stretch reads SRIQSRNFII. The segment covering 33–50 has biased composition (low complexity); it reads SSVYSSRSSSYNVRSSIS. Residues 72 to 424 form the IF rod domain; that stretch reads EKREMQNLNE…KLLEGEESRV (353 aa). The tract at residues 76–111 is coil 1A; that stretch reads MQNLNERLASYIEKVHFLDAQVKKLEAENEALRNRK. A linker 1 region spans residues 112 to 121; sequence VEDLQPIRDA. The interval 122–259 is coil 1B; that stretch reads YENELRQARK…DLLDQLELLK (138 aa). Serine 156 is subject to Sulfoserine. A linker 12 region spans residues 260-278; it reads PEPIQIKGMDYADFWKSEL. The coil 2 stretch occupies residues 279–424; that stretch reads AKCVREINLA…KLLEGEESRV (146 aa). A tail region spans residues 425-452; that stretch reads GLRTLVEQAIGTQSKGSASLKDAIQSSS.

This sequence belongs to the intermediate filament family.

The protein is Retrograde protein of 51 kDa (RGP51) of Lymnaea stagnalis (Great pond snail).